The sequence spans 212 residues: uncharacterized protein (212 aa).

This is an uncharacterized protein from Archaeoglobus fulgidus (strain ATCC 49558 / DSM 4304 / JCM 9628 / NBRC 100126 / VC-16).